A 428-amino-acid polypeptide reads, in one-letter code: MKTSLFKSLYFQVLTAIAIGILLGHFYPEIGEQMKPLGDGFVKLIKMIIAPVIFCTVVTGIAGMESMKAVGRTGAVALLYFEIVSTIALIIGLIIVNVVQPGAGMNVDPATLDAKAVAVYADQAKDQGIVAFIMDVIPASVIGAFASGNILQVLLFAVLFGFALHRLGSKGQLIFNVIESFSQVIFGIINMIMRLAPIGALGAMAFTIGKYGVGTLVQLGQLIICFYITCILFVVLVLGSIAKATGFSIFKFIRYIREELLIVLGTSSSESALPRMLDKMEKLGCRKSVVGLVIPTGYSFNLDGTSIYLTMAAVFIAQATNSQMDIVHQITLLIVLLLSSKGAAGVTGSGFIVLAATLSAVGHLPVAGLALILGIDRFMSEARALTNLVGNGVATIVVAKWVKELDHKKLDDVLNNRAPDGKTHELSS.

The next 8 helical transmembrane spans lie at 8–28 (SLYF…HFYP), 44–64 (LIKM…IAGM), 76–96 (VALL…LIIV), 142–162 (IGAF…LFGF), 184–206 (VIFG…AMAF), 222–242 (LIIC…GSIA), 326–346 (IVHQ…AAGV), and 352–372 (IVLA…LALI).

The protein belongs to the dicarboxylate/amino acid:cation symporter (DAACS) (TC 2.A.23) family.

Its subcellular location is the cell inner membrane. Functionally, responsible for the transport of dicarboxylates such as succinate, fumarate, and malate from the periplasm across the membrane. This is C4-dicarboxylate transport protein from Shigella flexneri.